Consider the following 200-residue polypeptide: Imidazole glycerol phosphate synthase subunit HisH (200 aa).

Residues 3–200 form the Glutamine amidotransferase type-1 domain; that stretch reads DVALIDAGGA…LRNFLEMSFP (198 aa). Catalysis depends on C78, which acts as the Nucleophile. Catalysis depends on residues H179 and E181.

Heterodimer of HisH and HisF.

The protein resides in the cytoplasm. It catalyses the reaction 5-[(5-phospho-1-deoxy-D-ribulos-1-ylimino)methylamino]-1-(5-phospho-beta-D-ribosyl)imidazole-4-carboxamide + L-glutamine = D-erythro-1-(imidazol-4-yl)glycerol 3-phosphate + 5-amino-1-(5-phospho-beta-D-ribosyl)imidazole-4-carboxamide + L-glutamate + H(+). The enzyme catalyses L-glutamine + H2O = L-glutamate + NH4(+). It functions in the pathway amino-acid biosynthesis; L-histidine biosynthesis; L-histidine from 5-phospho-alpha-D-ribose 1-diphosphate: step 5/9. Its function is as follows. IGPS catalyzes the conversion of PRFAR and glutamine to IGP, AICAR and glutamate. The HisH subunit catalyzes the hydrolysis of glutamine to glutamate and ammonia as part of the synthesis of IGP and AICAR. The resulting ammonia molecule is channeled to the active site of HisF. The sequence is that of Imidazole glycerol phosphate synthase subunit HisH from Xanthomonas euvesicatoria pv. vesicatoria (strain 85-10) (Xanthomonas campestris pv. vesicatoria).